The chain runs to 225 residues: NAD(P)H-quinone oxidoreductase subunit K, chloroplastic (225 aa).

Cys43, Cys44, Cys108, and Cys139 together coordinate [4Fe-4S] cluster.

Belongs to the complex I 20 kDa subunit family. In terms of assembly, NDH is composed of at least 16 different subunits, 5 of which are encoded in the nucleus. Requires [4Fe-4S] cluster as cofactor.

It is found in the plastid. It localises to the chloroplast thylakoid membrane. The catalysed reaction is a plastoquinone + NADH + (n+1) H(+)(in) = a plastoquinol + NAD(+) + n H(+)(out). It catalyses the reaction a plastoquinone + NADPH + (n+1) H(+)(in) = a plastoquinol + NADP(+) + n H(+)(out). In terms of biological role, NDH shuttles electrons from NAD(P)H:plastoquinone, via FMN and iron-sulfur (Fe-S) centers, to quinones in the photosynthetic chain and possibly in a chloroplast respiratory chain. The immediate electron acceptor for the enzyme in this species is believed to be plastoquinone. Couples the redox reaction to proton translocation, and thus conserves the redox energy in a proton gradient. The chain is NAD(P)H-quinone oxidoreductase subunit K, chloroplastic from Daucus carota (Wild carrot).